Reading from the N-terminus, the 313-residue chain is MDEGVIAVSAMDAFEKLEKVGEGTYGKVYRAREKATGKIVALKKTRLHEDEEGVPSTTLREISILRMLARDPHVVRLMDVKQGLSKEGKTVLYLVFEYMDTDVKKFIRSFRSTGKNIPTQTIKSLMYQLCKGMAFCHGHGILHRDLKPHNLLMDPKTMRLKIADLGLARAFTLPMKKYTHEILTLWYRAPEVLLGATHYSTAVDMWSVGCIFAELVTNQAIFQGDSELQQLLHIFKLFGTPNEEMWPGVSTLKNWHEYPQWKPSTLSSAVPNLDEAGVDLLSKMLQYEPAKRISAKMAMEHPYFDDLPEKSSL.

The residue at position 1 (methionine 1) is an N-acetylmethionine. The Protein kinase domain occupies phenylalanine 14–phenylalanine 304. Residues valine 20–valine 28 and lysine 43 each bind ATP. At tyrosine 25 the chain carries Phosphotyrosine. Catalysis depends on aspartate 145, which acts as the Proton acceptor. The residue at position 179 (threonine 179) is a Phosphothreonine.

This sequence belongs to the protein kinase superfamily. CMGC Ser/Thr protein kinase family. CDC2/CDKX subfamily. Interacts with CYCD4-1 and CKS1. In terms of tissue distribution, expressed in root tips, shoot apical meristem, leaf primordia vascular tissues and tapetum of anthers.

It carries out the reaction L-seryl-[protein] + ATP = O-phospho-L-seryl-[protein] + ADP + H(+). The catalysed reaction is L-threonyl-[protein] + ATP = O-phospho-L-threonyl-[protein] + ADP + H(+). It catalyses the reaction [DNA-directed RNA polymerase] + ATP = phospho-[DNA-directed RNA polymerase] + ADP + H(+). The sequence is that of Cyclin-dependent kinase B2-1 (CDKB2-1) from Arabidopsis thaliana (Mouse-ear cress).